A 147-amino-acid polypeptide reads, in one-letter code: Large ribosomal subunit protein bL9 (147 aa).

Belongs to the bacterial ribosomal protein bL9 family.

Functionally, binds to the 23S rRNA. This Clostridium novyi (strain NT) protein is Large ribosomal subunit protein bL9.